We begin with the raw amino-acid sequence, 181 residues long: ADP-ribosylation factor 1 (181 aa).

Residue Gly2 is the site of N-myristoyl glycine attachment. GTP is bound by residues 24–31 (GLDAAGKT), 126–129 (NKQD), and Ala160.

The protein belongs to the small GTPase superfamily. Arf family. May interact with GTPase RAB5b.

The protein resides in the golgi apparatus membrane. It catalyses the reaction GTP + H2O = GDP + phosphate + H(+). Alternates between an inactive GDP-bound form and an active GTP-bound form. Intrinsic GTPase activity is almost undetectable in vitro. Activated by a guanine nucleotide-exchange factor (GEF) and inactivated by GTPase-activating protein ARFGAP1. Its function is as follows. Small GTPase involved in protein trafficking between different compartments. Modulates vesicle budding and uncoating within the Golgi complex. In its GTP-bound form, triggers the recruitment of coatomer proteins to the Golgi membrane. The hydrolysis of ARF1-bound GTP, which is mediated by ARFGAPs proteins, is required for dissociation of coat proteins from Golgi membranes and vesicles. Regulates the transport of N-acylated AK2 to the parasitophorous vacuole membrane. May be involved in the activation of lipid kinase PIP5K. The protein is ADP-ribosylation factor 1 (ARF1) of Plasmodium falciparum (isolate NF54).